Consider the following 299-residue polypeptide: Bifunctional protein FolD (299 aa).

NADP(+) is bound by residues 168–170 (GRS), Ser-193, and Ile-234.

Belongs to the tetrahydrofolate dehydrogenase/cyclohydrolase family. As to quaternary structure, homodimer.

It catalyses the reaction (6R)-5,10-methylene-5,6,7,8-tetrahydrofolate + NADP(+) = (6R)-5,10-methenyltetrahydrofolate + NADPH. The enzyme catalyses (6R)-5,10-methenyltetrahydrofolate + H2O = (6R)-10-formyltetrahydrofolate + H(+). It participates in one-carbon metabolism; tetrahydrofolate interconversion. Its function is as follows. Catalyzes the oxidation of 5,10-methylenetetrahydrofolate to 5,10-methenyltetrahydrofolate and then the hydrolysis of 5,10-methenyltetrahydrofolate to 10-formyltetrahydrofolate. This Agrobacterium fabrum (strain C58 / ATCC 33970) (Agrobacterium tumefaciens (strain C58)) protein is Bifunctional protein FolD.